The chain runs to 312 residues: Homoserine kinase (312 aa).

91–101 (PVASGLGSSAC) contributes to the ATP binding site.

Belongs to the GHMP kinase family. Homoserine kinase subfamily.

The protein resides in the cytoplasm. It carries out the reaction L-homoserine + ATP = O-phospho-L-homoserine + ADP + H(+). It functions in the pathway amino-acid biosynthesis; L-threonine biosynthesis; L-threonine from L-aspartate: step 4/5. In terms of biological role, catalyzes the ATP-dependent phosphorylation of L-homoserine to L-homoserine phosphate. This chain is Homoserine kinase, found in Blochmanniella pennsylvanica (strain BPEN).